Reading from the N-terminus, the 520-residue chain is Cytochrome P450 734A1 (520 aa).

A helical transmembrane segment spans residues 13 to 33; it reads VLVLSVILSLVIVKGMSLLWW. Cys-463 is a heme binding site.

This sequence belongs to the cytochrome P450 family. Heme is required as a cofactor.

Its subcellular location is the membrane. In terms of biological role, cytochrome P450 involved in brassinosteroids (BRs) inactivation and regulation of BRs homeostasis. Inactivates the BRs castasterone (CS) and brassinolide (BL) through carbon 26 hydroxylation. Acts in association with CYP72C1 to inactivate BRs and modulate photomorphogenesis. The chain is Cytochrome P450 734A1 (CYP734A1) from Arabidopsis thaliana (Mouse-ear cress).